Reading from the N-terminus, the 783-residue chain is E3 UFM1-protein ligase 1 homolog (783 aa).

Residues 404-482 (SNSSANFDAD…AGSSRKSVKP (79 aa)) form a disordered region. Positions 445–457 (KSTKKHQRGRAAA) are enriched in basic residues.

The protein belongs to the UFL1 family.

Functionally, E3 UFM1-protein ligase that mediates ufmylation of target proteins. In Drosophila mojavensis (Fruit fly), this protein is E3 UFM1-protein ligase 1 homolog.